The primary structure comprises 243 residues: PF03932 family protein CutC (243 aa).

The protein belongs to the CutC family.

Its subcellular location is the cytoplasm. The polypeptide is PF03932 family protein CutC (Glaesserella parasuis serovar 5 (strain SH0165) (Haemophilus parasuis)).